The sequence spans 183 residues: Nucleoplasmin-like protein NO29 (183 aa).

Over residues 126–166 the composition is skewed to acidic residues; it reads SDDEDLSGSEEEMEDEEEEEDDDDDDDDDDDDDDDDDEEEI. The segment at 126-183 is disordered; it reads SDDEDLSGSEEEMEDEEEEEDDDDDDDDDDDDDDDDDEEEITPIKPAKKPLKTLSRTF.

The protein belongs to the nucleoplasmin family.

The protein resides in the nucleus. Its subcellular location is the nucleolus. The chain is Nucleoplasmin-like protein NO29 from Xenopus laevis (African clawed frog).